The following is a 101-amino-acid chain: Small ribosomal subunit protein bS6 (101 aa).

The protein belongs to the bacterial ribosomal protein bS6 family.

Functionally, binds together with bS18 to 16S ribosomal RNA. In Nitratidesulfovibrio vulgaris (strain ATCC 29579 / DSM 644 / CCUG 34227 / NCIMB 8303 / VKM B-1760 / Hildenborough) (Desulfovibrio vulgaris), this protein is Small ribosomal subunit protein bS6.